The following is a 240-amino-acid chain: 4-hydroxy-tetrahydrodipicolinate reductase (240 aa).

NAD(+)-binding positions include 79–81 and 103–106; these read ATT and SANM. The Proton donor/acceptor role is filled by His135. His136 lines the (S)-2,3,4,5-tetrahydrodipicolinate pocket. The active-site Proton donor is Lys139. 145-146 lines the (S)-2,3,4,5-tetrahydrodipicolinate pocket; it reads GT.

It belongs to the DapB family.

Its subcellular location is the cytoplasm. The catalysed reaction is (S)-2,3,4,5-tetrahydrodipicolinate + NAD(+) + H2O = (2S,4S)-4-hydroxy-2,3,4,5-tetrahydrodipicolinate + NADH + H(+). The enzyme catalyses (S)-2,3,4,5-tetrahydrodipicolinate + NADP(+) + H2O = (2S,4S)-4-hydroxy-2,3,4,5-tetrahydrodipicolinate + NADPH + H(+). The protein operates within amino-acid biosynthesis; L-lysine biosynthesis via DAP pathway; (S)-tetrahydrodipicolinate from L-aspartate: step 4/4. Catalyzes the conversion of 4-hydroxy-tetrahydrodipicolinate (HTPA) to tetrahydrodipicolinate. In Staphylococcus saprophyticus subsp. saprophyticus (strain ATCC 15305 / DSM 20229 / NCIMB 8711 / NCTC 7292 / S-41), this protein is 4-hydroxy-tetrahydrodipicolinate reductase.